The chain runs to 884 residues: Protein translocase subunit SecA (884 aa).

Residues glutamine 88, glycine 106–threonine 110, and aspartate 509 each bind ATP. Residues glutamate 822–aspartate 884 are disordered. The segment covering lysine 833–lysine 842 has biased composition (basic and acidic residues). Residues cysteine 858, cysteine 860, cysteine 869, and histidine 870 each coordinate Zn(2+).

It belongs to the SecA family. In terms of assembly, monomer and homodimer. Part of the essential Sec protein translocation apparatus which comprises SecA, SecYEG and auxiliary proteins SecDF-YajC and YidC. The cofactor is Zn(2+).

Its subcellular location is the cell inner membrane. The protein localises to the cytoplasm. It carries out the reaction ATP + H2O + cellular proteinSide 1 = ADP + phosphate + cellular proteinSide 2.. In terms of biological role, part of the Sec protein translocase complex. Interacts with the SecYEG preprotein conducting channel. Has a central role in coupling the hydrolysis of ATP to the transfer of proteins into and across the cell membrane, serving as an ATP-driven molecular motor driving the stepwise translocation of polypeptide chains across the membrane. The chain is Protein translocase subunit SecA from Campylobacter hominis (strain ATCC BAA-381 / DSM 21671 / CCUG 45161 / LMG 19568 / NCTC 13146 / CH001A).